We begin with the raw amino-acid sequence, 475 residues long: MAGRLLLLLLCAALPDELRAEGGVFIKKESADKFLERTKRANSFLEEMKQGNIERECNEERCSKEEAREAFEDNEKTEEFWNIYVDGDQCSSNPCHYGGQCKDGLGSYTCSCLDGYQGKNCEFVIPKYCKINNGDCEQFCSIKKSVQKDVVCSCTSGYELAEDGKQCVSKVKYPCGKVLMKRIKRSVILPTNSNTNATSDQDVPSTNGSILEEVFTTTTESPTPPPRNGSSITDPNVDTRIVGGDECRPGECPWQAVLINEKGEEFCGGTILNEDFILTAAHCINQSKEIKVVVGEVDREKEEHSETTHTAEKIFVHSKYIAETYDNDIALIKLKEPIQFSEYVVPACLPQADFANEVLMNQKSGMVSGFGREFEAGRLSKRLKVLEVPYVDRSTCKQSTNFAITENMFCAGYETEQKDACQGDSGGPHVTRYKDTYFVTGIVSWGEGCARKGKYGVYTKLSRFLRWVRTVMRQK.

The signal sequence occupies residues 1-20 (MAGRLLLLLLCAALPDELRA). Residues 21–40 (EGGVFIKKESADKFLERTKR) constitute a propeptide that is removed on maturation. Residues 41–85 (ANSFLEEMKQGNIERECNEERCSKEEAREAFEDNEKTEEFWNIYV) enclose the Gla domain. A 4-carboxyglutamate mark is found at Glu46, Glu47, Glu54, Glu56, Glu59, Glu60, Glu65, Glu66, Glu69, Glu72, and Glu79. Cys57 and Cys62 are oxidised to a cystine. Positions 86–122 (DGDQCSSNPCHYGGQCKDGLGSYTCSCLDGYQGKNCE) constitute an EGF-like 1; calcium-binding domain. Intrachain disulfides connect Cys90–Cys101, Cys95–Cys110, Cys112–Cys121, Cys129–Cys140, Cys136–Cys152, Cys154–Cys167, Cys175–Cys348, Cys247–Cys252, Cys267–Cys283, Cys396–Cys410, and Cys421–Cys449. The residue at position 103 (Asp103) is a (3R)-3-hydroxyaspartate. The region spanning 125 to 168 (IPKYCKINNGDCEQFCSIKKSVQKDVVCSCTSGYELAEDGKQCV) is the EGF-like 2 domain. Residues 186-240 (SVILPTNSNTNATSDQDVPSTNGSILEEVFTTTTESPTPPPRNGSSITDPNVDTR) constitute a propeptide, activation peptide. N-linked (GlcNAc...) asparagine glycosylation is found at Asn196, Asn207, and Asn228. Positions 216–237 (TTTTESPTPPPRNGSSITDPNV) are disordered. Residues 241–473 (IVGGDECRPG…FLRWVRTVMR (233 aa)) form the Peptidase S1 domain. The active-site Charge relay system is His282. N-linked (GlcNAc...) asparagine glycosylation is present at Asn285. The Charge relay system role is filled by Asp328. Catalysis depends on Ser425, which acts as the Charge relay system.

It belongs to the peptidase S1 family. In terms of assembly, the two chains are formed from a single-chain precursor by the excision of two Arg residues and are held together by 1 or more disulfide bonds. The vitamin K-dependent, enzymatic carboxylation of some glutamate residues allows the modified protein to bind calcium. Post-translationally, the activation peptide is cleaved by factor IXa (in the intrinsic pathway), or by factor VIIa (in the extrinsic pathway). In terms of processing, the iron and 2-oxoglutarate dependent 3-hydroxylation of aspartate and asparagine is (R) stereospecific within EGF domains. In terms of tissue distribution, liver and chorioallantoic membrane.

It localises to the secreted. It carries out the reaction Selective cleavage of Arg-|-Thr and then Arg-|-Ile bonds in prothrombin to form thrombin.. Factor Xa is a vitamin K-dependent glycoprotein that converts prothrombin to thrombin in the presence of factor Va, calcium and phospholipid during blood clotting. VAP cleaves the fusion proteins of Sendai virus, NDV, and influenza virus a at a specific single arginine-containing site, and plays a key role in the viral spreading in the allantoic sac. The sequence is that of Coagulation factor X (F10) from Gallus gallus (Chicken).